Consider the following 336-residue polypeptide: D-erythrose-4-phosphate dehydrogenase (336 aa).

An NAD(+)-binding site is contributed by 11-12 (RI). Substrate is bound by residues 153 to 155 (SCT), R199, 212 to 213 (TK), and R235. C154 (nucleophile) is an active-site residue. An NAD(+)-binding site is contributed by N317.

It belongs to the glyceraldehyde-3-phosphate dehydrogenase family. Epd subfamily. In terms of assembly, homotetramer.

The protein resides in the cytoplasm. It carries out the reaction D-erythrose 4-phosphate + NAD(+) + H2O = 4-phospho-D-erythronate + NADH + 2 H(+). It participates in cofactor biosynthesis; pyridoxine 5'-phosphate biosynthesis; pyridoxine 5'-phosphate from D-erythrose 4-phosphate: step 1/5. Its function is as follows. Catalyzes the NAD-dependent conversion of D-erythrose 4-phosphate to 4-phosphoerythronate. This chain is D-erythrose-4-phosphate dehydrogenase, found in Aeromonas salmonicida (strain A449).